Consider the following 160-residue polypeptide: MAQHRISHISLDENTILWRNADIEQERRVAIYDLIEENTFKPVRSNAAGHTGPYRLHLSVQDGRLAMDIRDRDDEELEMLILGLARFRRPIREYFAICDSYYQAIRKATPSEIETIDMARRGVHNHAAELLIERLEGKVETDFPTARRLFTLICVLHIKG.

This sequence belongs to the UPF0262 family.

The chain is UPF0262 protein ELI_10965 from Erythrobacter litoralis (strain HTCC2594).